We begin with the raw amino-acid sequence, 203 residues long: MRRRRGIVGIEAAIVLIAFVIVAAALAFVALNMGLFTTQKSKEVMQRGLEEATSALEVDGSVIANVTSGSVDAIAIPIKVSPGREGVDMSVDKTTVRVMLPSKFYENAYCGVFDGSSLSDSKLSTITSSIACTTGWAYLVIFNGDGDNVLELGEKGLLVLELPTPLNSYEEFKVEVRPVQGAALTVERIVPASLPTGGAVSLG.

A propeptide spanning residues 1 to 6 (MRRRRG) is cleaved from the precursor.

The protein belongs to the archaeal flagellin family.

The protein localises to the archaeal flagellum. Its function is as follows. Flagellin is the subunit protein which polymerizes to form the filaments of archaeal flagella. The polypeptide is Probable flagellin 1 (flaB1) (Aeropyrum pernix (strain ATCC 700893 / DSM 11879 / JCM 9820 / NBRC 100138 / K1)).